The following is a 462-amino-acid chain: Argininosuccinate lyase 2 (462 aa).

This sequence belongs to the lyase 1 family. Argininosuccinate lyase subfamily.

The protein resides in the cytoplasm. The catalysed reaction is 2-(N(omega)-L-arginino)succinate = fumarate + L-arginine. Its pathway is amino-acid biosynthesis; L-arginine biosynthesis; L-arginine from L-ornithine and carbamoyl phosphate: step 3/3. This Shouchella clausii (strain KSM-K16) (Alkalihalobacillus clausii) protein is Argininosuccinate lyase 2.